Consider the following 190-residue polypeptide: Elongation factor P (190 aa).

K34 is subject to N6-(3,6-diaminohexanoyl)-5-hydroxylysine.

It belongs to the elongation factor P family. Post-translationally, may be beta-lysylated on the epsilon-amino group of Lys-34 by the combined action of EpmA and EpmB, and then hydroxylated on the C5 position of the same residue by EpmC (if this protein is present). Lysylation is critical for the stimulatory effect of EF-P on peptide-bond formation. The lysylation moiety may extend toward the peptidyltransferase center and stabilize the terminal 3-CCA end of the tRNA. Hydroxylation of the C5 position on Lys-34 may allow additional potential stabilizing hydrogen-bond interactions with the P-tRNA.

Its subcellular location is the cytoplasm. It participates in protein biosynthesis; polypeptide chain elongation. Involved in peptide bond synthesis. Alleviates ribosome stalling that occurs when 3 or more consecutive Pro residues or the sequence PPG is present in a protein, possibly by augmenting the peptidyl transferase activity of the ribosome. Modification of Lys-34 is required for alleviation. This Hahella chejuensis (strain KCTC 2396) protein is Elongation factor P.